We begin with the raw amino-acid sequence, 457 residues long: Transmembrane protease serine 5 (457 aa).

The segment at 1–21 (MSLMLDDQPPMEAQYAEEGPG) is disordered. Residues 1 to 49 (MSLMLDDQPPMEAQYAEEGPGPGIFRAEPGDQQHPISQAVCWRSMRRGC) are Cytoplasmic-facing. The chain crosses the membrane as a helical; Signal-anchor for type II membrane protein span at residues 50-70 (AVLGALGLLAGAGVGSWLLVL). Residues 71–457 (YLCPAASQPI…IHDTAQDSLL (387 aa)) are Extracellular-facing. Residues 112-207 (FRINSEDFLL…SGQVVSLRCS (96 aa)) enclose the SRCR domain. Disulfide bonds link C135–C196, C148–C206, C209–C328, C243–C259, C342–C411, C374–C390, and C401–C429. N163, N170, and N195 each carry an N-linked (GlcNAc...) asparagine glycan. The Peptidase S1 domain occupies 218 to 453 (IVGGQSVAPG…FLDWIHDTAQ (236 aa)). Catalysis depends on charge relay system residues H258 and D308. 2 N-linked (GlcNAc...) asparagine glycosylation sites follow: N319 and N375. S405 functions as the Charge relay system in the catalytic mechanism.

Belongs to the peptidase S1 family. Brain-specific. Predominantly expressed in neurons, in their axons, and at the synapses of motoneurons in the spinal cord.

The protein resides in the cell membrane. In terms of biological role, may play a role in hearing. The protein is Transmembrane protease serine 5 (TMPRSS5) of Homo sapiens (Human).